Consider the following 434-residue polypeptide: ATP-dependent RNA helicase RhlB (434 aa).

Positions 9 to 37 (KKFADFPLKPEILAALNENGFEFCTPIQA) match the Q motif motif. The 180-residue stretch at 40-219 (LPILLNAKDI…YDHMNDPEKV (180 aa)) folds into the Helicase ATP-binding domain. Residue 53 to 60 (AQTGTGKT) coordinates ATP. The DEAD box signature appears at 165–168 (DEAD). The 148-residue stretch at 243-390 (KMRLLLSLIE…VSNYDKDALL (148 aa)) folds into the Helicase C-terminal domain. The interval 390-434 (LDDIPPPARIHRKPPTSRTRDGGSKGAHRSGGNTSRPPRHRTRRP) is disordered.

This sequence belongs to the DEAD box helicase family. RhlB subfamily. In terms of assembly, component of the RNA degradosome, which is a multiprotein complex involved in RNA processing and mRNA degradation.

The protein resides in the cytoplasm. It catalyses the reaction ATP + H2O = ADP + phosphate + H(+). Functionally, DEAD-box RNA helicase involved in RNA degradation. Has RNA-dependent ATPase activity and unwinds double-stranded RNA. This chain is ATP-dependent RNA helicase RhlB, found in Shewanella frigidimarina (strain NCIMB 400).